The primary structure comprises 103 residues: Large ribosomal subunit protein uL24 (103 aa).

The protein belongs to the universal ribosomal protein uL24 family. As to quaternary structure, part of the 50S ribosomal subunit.

One of two assembly initiator proteins, it binds directly to the 5'-end of the 23S rRNA, where it nucleates assembly of the 50S subunit. Its function is as follows. One of the proteins that surrounds the polypeptide exit tunnel on the outside of the subunit. In Brucella ovis (strain ATCC 25840 / 63/290 / NCTC 10512), this protein is Large ribosomal subunit protein uL24.